An 81-amino-acid chain; its full sequence is Photosystem I iron-sulfur center (81 aa).

2 consecutive 4Fe-4S ferredoxin-type domains span residues 2 to 31 and 39 to 68; these read AHSV…MIPW and IASA…VRVY. [4Fe-4S] cluster is bound by residues C11, C14, C17, C21, C48, C51, C54, and C58.

In terms of assembly, the eukaryotic PSI reaction center is composed of at least 11 subunits. [4Fe-4S] cluster serves as cofactor.

Its subcellular location is the plastid. The protein localises to the chloroplast thylakoid membrane. The catalysed reaction is reduced [plastocyanin] + hnu + oxidized [2Fe-2S]-[ferredoxin] = oxidized [plastocyanin] + reduced [2Fe-2S]-[ferredoxin]. Apoprotein for the two 4Fe-4S centers FA and FB of photosystem I (PSI); essential for photochemical activity. FB is the terminal electron acceptor of PSI, donating electrons to ferredoxin. The C-terminus interacts with PsaA/B/D and helps assemble the protein into the PSI complex. Required for binding of PsaD and PsaE to PSI. PSI is a plastocyanin-ferredoxin oxidoreductase, converting photonic excitation into a charge separation, which transfers an electron from the donor P700 chlorophyll pair to the spectroscopically characterized acceptors A0, A1, FX, FA and FB in turn. This Cycas taitungensis (Prince sago) protein is Photosystem I iron-sulfur center.